The sequence spans 423 residues: G-protein coupled receptor 83 (423 aa).

A signal peptide spans 1 to 17; it reads MKVPPVLLLFLLSSVRA. Over 18-71 the chain is Extracellular; the sequence is TEQPQVVTEHPSMEAALTGPNASSHFWANYTFSDWQNFVGRRRYGAESQNPTVK. N-linked (GlcNAc...) asparagine glycans are attached at residues asparagine 38 and asparagine 46. The chain crosses the membrane as a helical span at residues 72 to 92; sequence ALLIVAYSFTIVFSLFGNVLV. The Cytoplasmic segment spans residues 93–107; that stretch reads CHVIFKNQRMHSATS. The chain crosses the membrane as a helical span at residues 108 to 129; the sequence is LFIVNLAVADIMITLLNTPFTL. At 130-145 the chain is on the extracellular side; that stretch reads VRFVNSTWVFGKGMCH. N-linked (GlcNAc...) asparagine glycosylation occurs at asparagine 134. Residues cysteine 144 and cysteine 224 are joined by a disulfide bond. Residues 146–167 traverse the membrane as a helical segment; sequence VSRFAQYCSLHVSALTLTAIAV. The Cytoplasmic portion of the chain corresponds to 168–186; the sequence is DRHQVIMHPLKPRISITKG. The chain crosses the membrane as a helical span at residues 187–208; the sequence is VIYIAVIWVMATFFSLPHAICQ. At 209–238 the chain is on the extracellular side; the sequence is KLFTFKYSEDIVRSLCLPDFPEPADLFWKY. Residues 239–260 traverse the membrane as a helical segment; it reads LDLATFILLYLLPLFIISVAYA. Residues 261–293 lie on the Cytoplasmic side of the membrane; it reads RVAKKLWLCNTIGDVTTEQYLALRRKKKTTVKM. The chain crosses the membrane as a helical span at residues 294–315; sequence LVLVVVLFALCWFPLNCYVLLL. The Extracellular portion of the chain corresponds to 316 to 327; sequence SSKAIHTNNALY. Residues 328–348 traverse the membrane as a helical segment; it reads FAFHWFAMSSTCYNPFIYCWL. The Cytoplasmic portion of the chain corresponds to 349-423; that stretch reads NENFRVELKA…SSVEPVVAMS (75 aa). The interval 389 to 423 is disordered; the sequence is SHGRRAPLPNHHLPSSQIQSGKTDLSSVEPVVAMS. Positions 401-414 are enriched in polar residues; sequence LPSSQIQSGKTDLS.

This sequence belongs to the G-protein coupled receptor 1 family. Predominantly expressed in the brain, with moderate expression in the hypothalamus. Expressed in the thymus.

Its subcellular location is the cell membrane. Its function is as follows. G-protein coupled receptor for PEN, a neuropeptide produced from the precursor protein, proSAAS (encoded by PCSK1N). Acts through a G(i)- and G(q)-alpha-alpha-mediated pathway in response to PEN. Plays a role in food intake and body weight regulation. May contribute to the regulation of anxiety-related behaviors. This chain is G-protein coupled receptor 83, found in Mus musculus (Mouse).